Consider the following 330-residue polypeptide: Putative ADP-ribosyl glycohydrolase L543 (330 aa).

This sequence belongs to the ADP-ribosylglycohydrolase family.

The protein is Putative ADP-ribosyl glycohydrolase L543 of Acanthamoeba polyphaga mimivirus (APMV).